The following is a 780-amino-acid chain: Calpain clp-1 (780 aa).

Residues 269-282 (DVDPFVRPGPDPDR) show a composition bias toward basic and acidic residues. The segment at 269 to 300 (DVDPFVRPGPDPDRGGGGSGPSPISPRPTTEP) is disordered. The 296-residue stretch at 316–611 (LFEDPQFLAN…FEKMEICNLG (296 aa)) folds into the Calpain catalytic domain. Catalysis depends on residues Cys371, His527, and Asn551.

The protein belongs to the peptidase C2 family. Expressed in muscle and neuronal tissues. Expressed in the ventral and dorsal nerve cord, intestinal and hypodermal tissues.

Its subcellular location is the cytoplasm. The protein localises to the myofibril. It is found in the sarcomere. It localises to the m line. In terms of biological role, calcium-regulated non-lysosomal thiol-protease which catalyzes limited proteolysis of substrates. Required for assembly and maintenance of integrin attachment complexes which are essential for maintenance of adult muscle. Proteolytic activity is activated in response to increased intracellular Ca(2+) levels during cell degeneration and promotes necrotic cell death. In Caenorhabditis elegans, this protein is Calpain clp-1.